Reading from the N-terminus, the 432-residue chain is Negative regulator of systemic acquired resistance SNI1 (432 aa).

In terms of assembly, interacts with SSN2. Binds to NTL9/CBNAC to promote its binding to promoters of target genes. Component of the SMC5-SMC6 complex which consists at least of SMC5 and SMC6B. Interacts with RAD17. In terms of tissue distribution, expressed at low levels in the veins.

It localises to the nucleus. Functionally, component of the SMC5-SMC6 complex, a complex involved in repair of DNA double-strand breaks by homologous recombination. Transcription repressor that prevents expression of pathogenesis-related genes (PR) via histone modifications and binding negative cis-acting elements at their promoters. Negative regulator of hypersensitive response (HR) and systemic acquired resistance (SAR) required to dampen the basal expression of pathogenesis related (PR) genes. Functions synergistically with NTL9/CBNAC as negative regulator of pathogen-induced PR1 expression and basal resistance to a virulent strain of P.syringae. Binds to the PR1 gene promoter to suppress defense response in the absence of pathogen challenge and is removed in response to induction. Negatively regulates both gene expression and DNA recombination during pathogen infection, thus being involved in short-term defense response and a long-term survival strategy. Prevents effective immune responses that involve activation of DNA damage responses, probably by negatively regulating the DNA damage sensors RAD17 and ATR. Negative regulator of defenses against the beet cyst nematode H.schachtii. The sequence is that of Negative regulator of systemic acquired resistance SNI1 from Arabidopsis thaliana (Mouse-ear cress).